The following is a 349-amino-acid chain: Nicotinate-nucleotide--dimethylbenzimidazole phosphoribosyltransferase (349 aa).

Residue glutamate 316 is the Proton acceptor of the active site.

Belongs to the CobT family.

The catalysed reaction is 5,6-dimethylbenzimidazole + nicotinate beta-D-ribonucleotide = alpha-ribazole 5'-phosphate + nicotinate + H(+). It participates in nucleoside biosynthesis; alpha-ribazole biosynthesis; alpha-ribazole from 5,6-dimethylbenzimidazole: step 1/2. Catalyzes the synthesis of alpha-ribazole-5'-phosphate from nicotinate mononucleotide (NAMN) and 5,6-dimethylbenzimidazole (DMB). This chain is Nicotinate-nucleotide--dimethylbenzimidazole phosphoribosyltransferase, found in Photorhabdus laumondii subsp. laumondii (strain DSM 15139 / CIP 105565 / TT01) (Photorhabdus luminescens subsp. laumondii).